Here is a 476-residue protein sequence, read N- to C-terminus: Bifunctional protein HldE (476 aa).

A ribokinase region spans residues 1–319 (MKVSLPAFEK…EALALHHGES (319 aa)). 195–198 (NMSE) serves as a coordination point for ATP. Aspartate 264 is an active-site residue. The segment at 345 to 476 (MTNGCFDILH…AIIQNIMAKQ (132 aa)) is cytidylyltransferase.

This sequence in the N-terminal section; belongs to the carbohydrate kinase PfkB family. It in the C-terminal section; belongs to the cytidylyltransferase family. Homodimer.

The catalysed reaction is D-glycero-beta-D-manno-heptose 7-phosphate + ATP = D-glycero-beta-D-manno-heptose 1,7-bisphosphate + ADP + H(+). It catalyses the reaction D-glycero-beta-D-manno-heptose 1-phosphate + ATP + H(+) = ADP-D-glycero-beta-D-manno-heptose + diphosphate. The protein operates within nucleotide-sugar biosynthesis; ADP-L-glycero-beta-D-manno-heptose biosynthesis; ADP-L-glycero-beta-D-manno-heptose from D-glycero-beta-D-manno-heptose 7-phosphate: step 1/4. It participates in nucleotide-sugar biosynthesis; ADP-L-glycero-beta-D-manno-heptose biosynthesis; ADP-L-glycero-beta-D-manno-heptose from D-glycero-beta-D-manno-heptose 7-phosphate: step 3/4. Functionally, catalyzes the phosphorylation of D-glycero-D-manno-heptose 7-phosphate at the C-1 position to selectively form D-glycero-beta-D-manno-heptose-1,7-bisphosphate. Catalyzes the ADP transfer from ATP to D-glycero-beta-D-manno-heptose 1-phosphate, yielding ADP-D-glycero-beta-D-manno-heptose. In Shewanella sp. (strain MR-4), this protein is Bifunctional protein HldE.